The following is a 764-amino-acid chain: DNA-binding protein SATB1 (764 aa).

The segment covering 1 to 15 (MDHLNEATQGKEHSE) has biased composition (basic and acidic residues). The segment at 1–56 (MDHLNEATQGKEHSEMSNNVSDPKGPPAKIARLEQNGSPLGRGRLGSTGGKMQGVP) is disordered. Positions 20-40 (VSDPKGPPAKIARLEQNGSPL) match the Nuclear localization signal motif. The span at 43–52 (GRLGSTGGKM) shows a compositional bias: gly residues. Residue Lys51 forms a Glycyl lysine isopeptide (Lys-Gly) (interchain with G-Cter in SUMO2) linkage. Residues 71 to 172 (GTMLPVFCVV…VVTLKIQLHS (102 aa)) form the CMP domain. Lys136 bears the N6-acetyllysine mark. The Protein interaction signature appears at 139–143 (PVPLS). The region spanning 175–248 (KLEDLPPEQW…WYKHFKKTKD (74 aa)) is the CUTL domain. A Phosphoserine modification is found at Ser185. The nuclear matrix targeting sequence (NMTS) stretch occupies residues 224-278 (YYANVSAAKCQEFGRWYKHFKKTKDMMVEMDSLSELSQQGANHVNFGQQPVPGNT). Positions 224–278 (YYANVSAAKCQEFGRWYKHFKKTKDMMVEMDSLSELSQQGANHVNFGQQPVPGNT) match the Nuclear matrix targeting sequence (NMTS) motif. Positions 266–296 (HVNFGQQPVPGNTAEQPPSPAQLSHGSQPSV) are enriched in polar residues. A disordered region spans residues 266 to 307 (HVNFGQQPVPGNTAEQPPSPAQLSHGSQPSVRTPLPNLHPGL). The segment at residues 361-448 (LEQQVSTNTE…ERDRIYQDER (88 aa)) is a DNA-binding region (CUT 1). Residues Gln390, 400–410 (RTQGLLSEILR), and Asn425 contribute to the DNA site. Residues 450–474 (RSLNAASAMGPAPLLSTPPSRPPQV) form a disordered region. The segment at residues 484-571 (NGKPENNTMN…ERDAIYEQES (88 aa)) is a DNA-binding region (CUT 2). A disordered region spans residues 591–650 (QIQQQQQQQQQQQQQQQPPPPPPQPQPQPQAGPRLPPRQPTVASSAESDEENRQKTRPRT). A compositionally biased stretch (low complexity) spans 593-606 (QQQQQQQQQQQQQQ). The segment covering 607-629 (QPPPPPPQPQPQPQAGPRLPPRQ) has biased composition (pro residues). Ser638 carries the post-translational modification Phosphoserine. Residues 646-705 (TRPRTKISVEALGILQSFIQDVGLYPDEEAIQTLSAQLDLPKYTIIKFFQNQRYYLKHHG) constitute a DNA-binding region (homeobox). Residue Lys745 forms a Glycyl lysine isopeptide (Lys-Gly) (interchain with G-Cter in SUMO) linkage.

The protein belongs to the CUT homeobox family. In terms of assembly, interacts with PCAF. Interacts with sumoylated PML and HDAC1 Tat via the CMP domain. Also interacts with DYNLT3 and POLR2J2. Binds to EP300. Homodimer. Part of the nuclear protein complex gamma-globin promoter and enhancer binding factor (gamma-PE) composed at least of SATB1 and HOXB2. Interaction with CtBP1 when not acetylated stabilizes attachment to DNA and promotes transcription repression. Interacts with CUX1 (via DNA-binding domains); the interaction inhibits the attachment of both proteins to DNA. Post-translationally, sumoylated. Sumoylation promotes cleavage by caspases. In terms of processing, phosphorylated by PKC. Acetylated by PCAF. Phosphorylated form interacts with HDAC1, but unphosphorylated form interacts with PCAF. DNA binding properties are activated by phosphorylation and inactivated by acetylation. In opposition, gene expression is down-regulated by phosphorylation but up-regulated by acetylation. Cleaved at Asp-254 by caspase-3 and caspase-6 during T-cell apoptosis in thymus and during B-cell stimulation. The cleaved forms cannot dimerize and lose transcription regulation function because of impaired DNA and chromatin association. Expressed in the subventricular zone, rostral migratory stream and in the olfactory bulb (at protein level). Mainly expressed in thymus, spleen, and lymph nodes with a lower level observed in the brain.

It localises to the nucleus. The protein localises to the PML body. Functionally, required for the switching of fetal globin species, and beta- and gamma-globin genes regulation during erythroid differentiation. Plays a role in chromatin organization and nuclear architecture during apoptosis. Crucial silencing factor contributing to the initiation of X inactivation mediated by Xist RNA that occurs during embryogenesis and in lymphoma. Binds to DNA at special AT-rich sequences, the consensus SATB1-binding sequence (CSBS), at nuclear matrix- or scaffold-associated regions. Thought to recognize the sugar-phosphate structure of double-stranded DNA. Transcriptional repressor controlling nuclear and viral gene expression in a phosphorylated and acetylated status-dependent manner, by binding to matrix attachment regions (MARs) of DNA and inducing a local chromatin-loop remodeling. Acts as a docking site for several chromatin remodeling enzymes and also by recruiting corepressors (HDACs) or coactivators (HATs) directly to promoters and enhancers. Modulates genes that are essential in the maturation of the immune T-cell CD8SP from thymocytes. Promotes neuronal differentiation of neural stem/progenitor cells in the adult subventricular zone, possibly by positively regulating the expression of NEUROD1. This is DNA-binding protein SATB1 (Satb1) from Mus musculus (Mouse).